A 453-amino-acid polypeptide reads, in one-letter code: Flavonol-3-O-rhamnosyltransferase (453 aa).

H24 (proton acceptor) is an active-site residue. Residue H24 coordinates an anthocyanidin. D119 acts as the Charge relay in catalysis. H150 is a binding site for an anthocyanidin. UDP-beta-L-rhamnose contacts are provided by T280, A333, H350, N354, S355, and E358. A373 contributes to the an anthocyanidin binding site.

This sequence belongs to the UDP-glycosyltransferase family. As to expression, expressed in leaves, flowers, siliques, and stems. Expressed in the shoot apex.

It catalyses the reaction kaempferol + UDP-beta-L-rhamnose = kaempferol 3-O-alpha-L-rhamnoside + UDP + H(+). The catalysed reaction is UDP-beta-L-rhamnose + quercetin = quercitrin + UDP + H(+). It participates in flavonoid metabolism. Functionally, flavonol 3-O-rhamnosyltransferase that catalyzes the transfer of rhamnose from UDP-rhamnose to the 3-OH position of kaempferol and quercetin. Possesses low quercetin 3-O-glucosyltransferase activity in vitro. The chain is Flavonol-3-O-rhamnosyltransferase from Arabidopsis thaliana (Mouse-ear cress).